The sequence spans 28 residues: Peptide 2 (28 aa).

This sequence belongs to the short scorpion toxin superfamily. Potassium channel inhibitor family. Alpha-KTx 09 subfamily. In terms of tissue distribution, expressed by the venom gland.

The protein resides in the secreted. Blocks potassium channels. This Hottentotta tamulus sindicus (Scorpion) protein is Peptide 2.